A 60-amino-acid polypeptide reads, in one-letter code: Large ribosomal subunit protein bL32 (60 aa).

Residues 1-25 (MAVQQNKKSPSKRGMHRSHNALNVP) are disordered. Residues 9 to 19 (SPSKRGMHRSH) show a composition bias toward basic residues.

Belongs to the bacterial ribosomal protein bL32 family.

This is Large ribosomal subunit protein bL32 from Polaromonas naphthalenivorans (strain CJ2).